The chain runs to 600 residues: DNA ligase (600 aa).

Aspartate 259 is a binding site for ATP. Lysine 261 serves as the catalytic N6-AMP-lysine intermediate. ATP-binding residues include arginine 266, arginine 281, glutamate 311, phenylalanine 351, arginine 428, and lysine 434.

The protein belongs to the ATP-dependent DNA ligase family. Mg(2+) is required as a cofactor.

It catalyses the reaction ATP + (deoxyribonucleotide)n-3'-hydroxyl + 5'-phospho-(deoxyribonucleotide)m = (deoxyribonucleotide)n+m + AMP + diphosphate.. Functionally, DNA ligase that seals nicks in double-stranded DNA during DNA replication, DNA recombination and DNA repair. The polypeptide is DNA ligase (Acidianus ambivalens (Desulfurolobus ambivalens)).